We begin with the raw amino-acid sequence, 364 residues long: Rhomboid domain-containing protein 2 (364 aa).

The next 5 membrane-spanning stretches (helical) occupy residues Trp-11–Val-31, Leu-63–Ile-83, Cys-100–Val-120, Phe-158–Ile-178, and Leu-184–Ile-204. Disordered stretches follow at residues Ala-242–Ser-282 and Ser-317–Pro-364. Composition is skewed to polar residues over residues His-267 to Ser-276 and Ser-317 to Gly-329.

Belongs to the peptidase S54 family.

The protein localises to the golgi apparatus. It is found in the cis-Golgi network membrane. This Homo sapiens (Human) protein is Rhomboid domain-containing protein 2 (RHBDD2).